We begin with the raw amino-acid sequence, 1217 residues long: Nuclear matrix constituent protein 1 (1217 aa).

Residues 1 to 14 (MLTPQRSAWSLKSK) are compositionally biased toward polar residues. Residues 1–45 (MLTPQRSAWSLKSKVSSEKPRSKGKGITKNLDSAATPFPPLGLLN) form a disordered region. Positions 159–746 (VTDLEKALRE…KNQRAEFIKE (588 aa)) form a coiled coil. Low complexity predominate over residues 892 to 904 (SEDAAANDNNPAA). 4 disordered regions span residues 892 to 969 (SEDA…VVDD), 981 to 1057 (EEAK…VQAP), 1087 to 1117 (VQTKASHQASHDNNQISMGDDPALEGSHKVT), and 1152 to 1217 (ISEM…FFTT). Over residues 947-960 (STRRGRGGKTVRRT) the composition is skewed to basic residues. Composition is skewed to polar residues over residues 986–1007 (SSQQNDEQSQGASVHTGGTSNT) and 1087–1103 (VQTKASHQASHDNNQIS). Low complexity predominate over residues 1173–1186 (EEPATPSSGSSTSG). Acidic residues predominate over residues 1189-1200 (GNDDDMDDDDEE).

This sequence belongs to the CRWN family.

It is found in the nucleus matrix. Its subcellular location is the nucleus lamina. Its function is as follows. Architectural component of nuclear structure that plays different roles in controlling nuclear size and morphology. Involved in the organization of multimeric complexes in the peripheral nucleoskeleton. The polypeptide is Nuclear matrix constituent protein 1 (Allium cepa (Onion)).